A 304-amino-acid chain; its full sequence is tRNA-uridine aminocarboxypropyltransferase 1 (304 aa).

The segment at 1 to 30 (MALSPSVVPQESEENNANCVETKQSQTAST) is disordered. The segment covering 15–30 (NNANCVETKQSQTAST) has biased composition (polar residues). Positions 206–209 (DSTW) match the DXTW motif.

It belongs to the TDD superfamily. DTWD1 family.

It is found in the nucleus. It catalyses the reaction a uridine in tRNA + S-adenosyl-L-methionine = a 3-[(3S)-3-amino-3-carboxypropyl]uridine in tRNA + S-methyl-5'-thioadenosine + H(+). Catalyzes the formation of 3-(3-amino-3-carboxypropyl)uridine (acp3U) at position 20 in the D-loop of several cytoplasmic tRNAs (acp3U(20)). The sequence is that of tRNA-uridine aminocarboxypropyltransferase 1 from Rattus norvegicus (Rat).